Here is a 33-residue protein sequence, read N- to C-terminus: Helofensin-1 (33 aa).

Belongs to the beta-defensin family. Helofensin subfamily. In terms of tissue distribution, expressed by the venom gland.

The protein resides in the secreted. Lethal toxin which possesses an inhibitory effect on direct electrical stimulation of the isolated hemi-diaphragm. Neither hemorrhagic nor hemolytic activities are detected. Phospholipase A2 activity, proteolytic activity and arginine esterolytic activity are absent. The polypeptide is Helofensin-1 (Heloderma horridum horridum (Mexican beaded lizard)).